A 287-amino-acid polypeptide reads, in one-letter code: Nucleotide-binding protein VIBHAR_03667 (287 aa).

8–15 (GHSGAGKS) lines the ATP pocket. 56–59 (DIRN) contacts GTP.

It belongs to the RapZ-like family.

Displays ATPase and GTPase activities. The protein is Nucleotide-binding protein VIBHAR_03667 of Vibrio campbellii (strain ATCC BAA-1116).